Consider the following 229-residue polypeptide: Peptidyl-tRNA hydrolase (229 aa).

Position 17 (Y17) interacts with tRNA. H22 acts as the Proton acceptor in catalysis. The tRNA site is built by F74, N76, and N122. The disordered stretch occupies residues 194–229 (AGKTTRPRKPVRQTANAEASNNSPEASATPQNKDNT). Residues 207-223 (TANAEASNNSPEASATP) are compositionally biased toward low complexity.

This sequence belongs to the PTH family. Monomer.

Its subcellular location is the cytoplasm. It carries out the reaction an N-acyl-L-alpha-aminoacyl-tRNA + H2O = an N-acyl-L-amino acid + a tRNA + H(+). In terms of biological role, hydrolyzes ribosome-free peptidyl-tRNAs (with 1 or more amino acids incorporated), which drop off the ribosome during protein synthesis, or as a result of ribosome stalling. Functionally, catalyzes the release of premature peptidyl moieties from peptidyl-tRNA molecules trapped in stalled 50S ribosomal subunits, and thus maintains levels of free tRNAs and 50S ribosomes. This is Peptidyl-tRNA hydrolase from Desulfovibrio desulfuricans (strain ATCC 27774 / DSM 6949 / MB).